The following is a 446-amino-acid chain: Methionine aminopeptidase 2 (446 aa).

The interval 1-85 (MAGVTEGEDT…KNKKKKKKKI (85 aa)) is disordered. Basic and acidic residues predominate over residues 8–32 (EDTKVIESKINELNIDKPKLEDNNE). Residues 42–58 (SGDDDDDDKEEDDDNEI) show a composition bias toward acidic residues. The span at 73–85 (KKNKNKKKKKKKI) shows a compositional bias: basic residues. His-197 contributes to the substrate binding site. Positions 217, 228, and 299 each coordinate a divalent metal cation. His-307 provides a ligand contact to substrate. Residues Glu-332 and Glu-427 each contribute to the a divalent metal cation site.

It belongs to the peptidase M24A family. Methionine aminopeptidase eukaryotic type 2 subfamily. The cofactor is Co(2+). Zn(2+) is required as a cofactor. Requires Mn(2+) as cofactor. It depends on Fe(2+) as a cofactor.

The protein resides in the cytoplasm. It carries out the reaction Release of N-terminal amino acids, preferentially methionine, from peptides and arylamides.. In terms of biological role, cotranslationally removes the N-terminal methionine from nascent proteins. The N-terminal methionine is often cleaved when the second residue in the primary sequence is small and uncharged (Met-Ala-, Cys, Gly, Pro, Ser, Thr, or Val). The sequence is that of Methionine aminopeptidase 2 from Candida albicans (strain SC5314 / ATCC MYA-2876) (Yeast).